Reading from the N-terminus, the 429-residue chain is Ribosomal RNA small subunit methyltransferase B (429 aa).

S-adenosyl-L-methionine-binding positions include 254–260 (CAAPGGK), Asp277, Asp303, and Asp322. Cys375 functions as the Nucleophile in the catalytic mechanism. Positions 397–419 (ALSETGTPDQPGQQNLPGGEEGD) are disordered. The span at 400–412 (ETGTPDQPGQQNL) shows a compositional bias: polar residues.

It belongs to the class I-like SAM-binding methyltransferase superfamily. RsmB/NOP family.

Its subcellular location is the cytoplasm. It catalyses the reaction cytidine(967) in 16S rRNA + S-adenosyl-L-methionine = 5-methylcytidine(967) in 16S rRNA + S-adenosyl-L-homocysteine + H(+). Specifically methylates the cytosine at position 967 (m5C967) of 16S rRNA. This is Ribosomal RNA small subunit methyltransferase B from Salmonella heidelberg (strain SL476).